Reading from the N-terminus, the 197-residue chain is Holliday junction branch migration complex subunit RuvA (197 aa).

The domain I stretch occupies residues 1–63; it reads MYDYIKGNLT…EDAHLLYGFH (63 aa). The segment at 64–142 is domain II; that stretch reads TEDEKAVFLN…DINEVSTDKS (79 aa). A flexible linker region spans residues 143-147; sequence KVSTI. The domain III stretch occupies residues 148–197; that stretch reads NNNQELEEAVEALLALGYKTNELKKIEKFFEGTTDTAENYIKSALKMLMK.

This sequence belongs to the RuvA family. As to quaternary structure, homotetramer. Forms an RuvA(8)-RuvB(12)-Holliday junction (HJ) complex. HJ DNA is sandwiched between 2 RuvA tetramers; dsDNA enters through RuvA and exits via RuvB. An RuvB hexamer assembles on each DNA strand where it exits the tetramer. Each RuvB hexamer is contacted by two RuvA subunits (via domain III) on 2 adjacent RuvB subunits; this complex drives branch migration. In the full resolvosome a probable DNA-RuvA(4)-RuvB(12)-RuvC(2) complex forms which resolves the HJ.

It is found in the cytoplasm. The RuvA-RuvB-RuvC complex processes Holliday junction (HJ) DNA during genetic recombination and DNA repair, while the RuvA-RuvB complex plays an important role in the rescue of blocked DNA replication forks via replication fork reversal (RFR). RuvA specifically binds to HJ cruciform DNA, conferring on it an open structure. The RuvB hexamer acts as an ATP-dependent pump, pulling dsDNA into and through the RuvAB complex. HJ branch migration allows RuvC to scan DNA until it finds its consensus sequence, where it cleaves and resolves the cruciform DNA. This chain is Holliday junction branch migration complex subunit RuvA, found in Streptococcus mutans serotype c (strain ATCC 700610 / UA159).